Consider the following 303-residue polypeptide: UDP-3-O-acyl-N-acetylglucosamine deacetylase (303 aa).

Zn(2+) contacts are provided by H78, H237, and D241. The active-site Proton donor is H264.

This sequence belongs to the LpxC family. The cofactor is Zn(2+).

It carries out the reaction a UDP-3-O-[(3R)-3-hydroxyacyl]-N-acetyl-alpha-D-glucosamine + H2O = a UDP-3-O-[(3R)-3-hydroxyacyl]-alpha-D-glucosamine + acetate. The protein operates within glycolipid biosynthesis; lipid IV(A) biosynthesis; lipid IV(A) from (3R)-3-hydroxytetradecanoyl-[acyl-carrier-protein] and UDP-N-acetyl-alpha-D-glucosamine: step 2/6. Catalyzes the hydrolysis of UDP-3-O-myristoyl-N-acetylglucosamine to form UDP-3-O-myristoylglucosamine and acetate, the committed step in lipid A biosynthesis. The protein is UDP-3-O-acyl-N-acetylglucosamine deacetylase of Pseudomonas putida (strain GB-1).